A 159-amino-acid chain; its full sequence is Small ribosomal subunit protein uS4 (159 aa).

Positions 106–158 (RRLQTLVFRMGLAKSIHHARQLVVHGHVLVAGRRVTSPGFLVPRELEDKITIE) constitute an S4 RNA-binding domain.

It belongs to the universal ribosomal protein uS4 family. In terms of assembly, part of the 30S ribosomal subunit. Contacts protein S5. The interaction surface between S4 and S5 is involved in control of translational fidelity.

Its function is as follows. One of the primary rRNA binding proteins, it binds directly to 16S rRNA where it nucleates assembly of the body of the 30S subunit. In terms of biological role, with S5 and S12 plays an important role in translational accuracy. This Pyrobaculum calidifontis (strain DSM 21063 / JCM 11548 / VA1) protein is Small ribosomal subunit protein uS4.